Consider the following 568-residue polypeptide: bZIP transcription factor 60 (568 aa).

Composition is skewed to low complexity over residues 1–13 (MAEP…FADL) and 60–78 (TTSS…TSSA). Disordered stretches follow at residues 1-29 (MAEP…TLGD) and 45-134 (DFDV…RKKQ). At 1–240 (MAEPDLLAPF…PAKKARKTKK (240 aa)) the chain is on the cytoplasmic side. The span at 103-113 (GGKDGKDDEAK) shows a compositional bias: basic and acidic residues. The region spanning 111–171 (EAKRRARLVR…AENAALKQQL (61 aa)) is the bZIP domain. Residues 113–144 (KRRARLVRNRESAHQSRQRKKQYVEELEGKVK) are basic motif. The interval 150–157 (IADLTARI) is leucine-zipper. Residues 241–261 (VAGVSLLGLLFLMMVCGCLVP) form a helical membrane-spanning segment. The Lumenal portion of the chain corresponds to 262-568 (AVNRMYGAAY…LPFKSHSPHL (307 aa)). 5 N-linked (GlcNAc...) asparagine glycosylation sites follow: Asn-307, Asn-452, Asn-456, Asn-488, and Asn-499. The disordered stretch occupies residues 479 to 510 (AIPLRGSTSNDTDHFKAPPKNHSQSHAGRKPV).

This sequence belongs to the bZIP family.

It is found in the endoplasmic reticulum membrane. It localises to the nucleus. Its function is as follows. Transcription factor involved in endoplasmic reticulum (ER) stress response. Acts as a ER stress sensor and activates the transcription factor BZIP50 and the chaperone BIP1. This Oryza sativa subsp. japonica (Rice) protein is bZIP transcription factor 60.